The primary structure comprises 445 residues: UPF0210 protein SPT_0285 (445 aa).

Belongs to the UPF0210 family. As to quaternary structure, homodimer.

The polypeptide is UPF0210 protein SPT_0285 (Streptococcus pneumoniae (strain Taiwan19F-14)).